The sequence spans 250 residues: Peptidyl-tRNA hydrolase, mitochondrial (250 aa).

The N-terminal 45 residues, 1-45 (MRLLSGASASRIPCPLLSLARARARCLPVPASATACRAASSSAAA), are a transit peptide targeting the mitochondrion. Residue Y68 participates in tRNA binding. H73 acts as the Proton acceptor in catalysis. Positions 118, 120, and 166 each coordinate tRNA.

The protein belongs to the PTH family.

Its subcellular location is the mitochondrion. The catalysed reaction is an N-acyl-L-alpha-aminoacyl-tRNA + H2O = an N-acyl-L-amino acid + a tRNA + H(+). In terms of biological role, the natural substrate for this enzyme may be peptidyl-tRNAs which drop off the ribosome during protein synthesis. The sequence is that of Peptidyl-tRNA hydrolase, mitochondrial from Oryza sativa subsp. japonica (Rice).